We begin with the raw amino-acid sequence, 317 residues long: MAAPMELFCWSGGWGLPSVDLDSLAVLTYARFTGAPLKVHKISNPWRSPSGTLPALRTSHGEVISVPHKIITHLRKEKYNADYDLSARQGADTLAFMSLLEEKLLPVLVHTFWIDTKNYVEVTRKWYAEAMPFPLNFFLPGRMQRQYMERLELLSGEHMPEDEEELEKELYREARECLTLLSQRLGSQKFFFGDAPASLDAFVFSYLALLLQAKLPSGKLQAHLRGLHNLCAYCTHILSLYFPWDGAEVPPPRQTPAGPETEEEPYRRRNQILSVLAGLAAMVGYALLSGIVSIQRATPARAPGTRALGMAEEDEEE.

Glycyl lysine isopeptide (Lys-Gly) (interchain with G-Cter in ubiquitin) cross-links involve residues K38, K41, and K78. Residues 164–184 traverse the membrane as a helical segment; the sequence is EELEKELYREARECLTLLSQR.

This sequence belongs to the metaxin family. As to quaternary structure, interacts with MTX2/metaxin-2. Associates with the mitochondrial contact site and cristae organizing system (MICOS) complex, composed of at least MICOS10/MIC10, CHCHD3/MIC19, CHCHD6/MIC25, APOOL/MIC27, IMMT/MIC60, APOO/MIC23/MIC26 and QIL1/MIC13. This complex was also known under the names MINOS or MitOS complex. The MICOS complex associates with mitochondrial outer membrane proteins SAMM50, MTX1 and MTX2 (together described as components of the mitochondrial outer membrane sorting assembly machinery (SAM) complex) and DNAJC11, mitochondrial inner membrane protein TMEM11 and with HSPA9. The MICOS and SAM complexes together with DNAJC11 are part of a large protein complex spanning both membranes termed the mitochondrial intermembrane space bridging (MIB) complex. Interacts with ARMC1. Ubiquitinated by PRKN during mitophagy, leading to its degradation and enhancement of mitophagy. Deubiquitinated by USP30.

The protein resides in the mitochondrion outer membrane. Its function is as follows. Involved in transport of proteins into the mitochondrion. Essential for embryonic development. The sequence is that of Metaxin-1 (MTX1) from Macaca fascicularis (Crab-eating macaque).